Here is a 104-residue protein sequence, read N- to C-terminus: Circadian clock oscillator protein KaiB (104 aa).

It belongs to the KaiB family. In terms of assembly, the KaiABC complex composition changes during the circadian cycle to control KaiC phosphorylation. Complexes KaiC(6), KaiA(2-4):KaiC(6), KaiB(6):KaiC(6) and KaiC(6):KaiB(6):KaiA(12) are among the most important forms, many form cooperatively. Undergoes a major conformational rearrangment; in the free state forms homotetramers as a dimer of dimers. When bound to the CI domain of KaiC switches to a monomeric thioredoxin-fold (KaiB(fs)). KaiB(fs) binds CikA, leading it to dephosphorylate phospho-RpaA.

Key component of the KaiABC oscillator complex, which constitutes the main circadian regulator in cyanobacteria. Complex composition changes during the circadian cycle to control KaiC phosphorylation. KaiA stimulates KaiC autophosphorylation, while KaiB sequesters KaiA, leading to KaiC autodephosphorylation. Phospho-Ser-431 KaiC accumulation triggers binding of KaiB to form the KaiB(6):KaiC(6) complex, leading to changes in output regulators CikA and SasA. KaiB switches to a thioredoxin-like fold (KaiB(fs)) when bound to KaiC. KaiB(6):KaiC(6) formation exposes a site for KaiA binding that sequesters KaiA from KaiC, making the KaiC(6):KaiB(6):KaiA(12) complex that results in KaiC autodephosphorylation. Its function is as follows. A metamorphic protein which reversibly switches between an inactive tetrameric fold and a rare, thioredoxin-like monomeric fold (KaiB(fs)). KaiB(fs) binds phospho-KaiC, KaiA and CikA. KaiA and CikA compete for binding to KaiB(fs), and KaiB(fs) and SasA compete for binding to KaiC, thus the clock oscillator and output signal pathway are tightly coupled. This Microcystis aeruginosa (strain NIES-843 / IAM M-2473) protein is Circadian clock oscillator protein KaiB.